Reading from the N-terminus, the 314-residue chain is Ribosomal RNA small subunit methyltransferase H (314 aa).

S-adenosyl-L-methionine is bound by residues 40-42, aspartate 60, phenylalanine 85, aspartate 107, and glutamine 114; that span reads GGH.

This sequence belongs to the methyltransferase superfamily. RsmH family.

It localises to the cytoplasm. It catalyses the reaction cytidine(1402) in 16S rRNA + S-adenosyl-L-methionine = N(4)-methylcytidine(1402) in 16S rRNA + S-adenosyl-L-homocysteine + H(+). Functionally, specifically methylates the N4 position of cytidine in position 1402 (C1402) of 16S rRNA. This chain is Ribosomal RNA small subunit methyltransferase H, found in Hydrogenovibrio crunogenus (strain DSM 25203 / XCL-2) (Thiomicrospira crunogena).